The sequence spans 289 residues: tRNA pseudouridine synthase B (289 aa).

Asp38 acts as the Nucleophile in catalysis.

This sequence belongs to the pseudouridine synthase TruB family. Type 1 subfamily.

It catalyses the reaction uridine(55) in tRNA = pseudouridine(55) in tRNA. Responsible for synthesis of pseudouridine from uracil-55 in the psi GC loop of transfer RNAs. This chain is tRNA pseudouridine synthase B, found in Acaryochloris marina (strain MBIC 11017).